We begin with the raw amino-acid sequence, 575 residues long: Alpha-(1,6)-fucosyltransferase (575 aa).

The Cytoplasmic portion of the chain corresponds to M1–R9. Residues W10–V30 form a helical; Signal-anchor for type II membrane protein membrane-spanning segment. Residues R31–K575 are Lumenal-facing. Cystine bridges form between C204-C266, C212-C230, and C218-C222. One can recognise a GT23 domain in the interval K206 to L493. Residue S278 is modified to Phosphoserine. An SH3-binding motif is present at residues P299–P305. An important for donor substrate binding region spans residues R365–R366. C465 and C472 are oxidised to a cystine. In terms of domain architecture, SH3 spans Q502 to E563.

This sequence belongs to the glycosyltransferase 23 family. Post-translationally, tyrosine phosphorylated by PKDCC/VLK.

Its subcellular location is the golgi apparatus. The protein resides in the golgi stack membrane. The catalysed reaction is N(4)-{beta-D-GlcNAc-(1-&gt;2)-alpha-D-Man-(1-&gt;3)-[beta-D-GlcNAc-(1-&gt;2)-alpha-D-Man-(1-&gt;6)]-beta-D-Man-(1-&gt;4)-beta-D-GlcNAc-(1-&gt;4)-beta-D-GlcNAc}-L-asparaginyl-[protein] + GDP-beta-L-fucose = an N(4)-{beta-D-GlcNAc-(1-&gt;2)-alpha-D-Man-(1-&gt;3)-[beta-D-GlcNAc-(1-&gt;2)-alpha-D-Man-(1-&gt;6)]-beta-D-Man-(1-&gt;4)-beta-D-GlcNAc-(1-&gt;4)-[alpha-L-Fuc-(1-&gt;6)]-beta-D-GlcNAc}-L-asparaginyl-[protein] + GDP + H(+). The protein operates within protein modification; protein glycosylation. Functionally, catalyzes the addition of fucose in alpha 1-6 linkage to the first GlcNAc residue, next to the peptide chains in N-glycans. The polypeptide is Alpha-(1,6)-fucosyltransferase (Fut8) (Rattus norvegicus (Rat)).